The chain runs to 439 residues: Xaa-Pro dipeptidase (439 aa).

Residues D244, D255, H335, E380, and E419 each contribute to the Mn(2+) site.

This sequence belongs to the peptidase M24B family. Bacterial-type prolidase subfamily. It depends on Mn(2+) as a cofactor.

It catalyses the reaction Xaa-L-Pro dipeptide + H2O = an L-alpha-amino acid + L-proline. In terms of biological role, splits dipeptides with a prolyl residue in the C-terminal position. The sequence is that of Xaa-Pro dipeptidase from Shewanella woodyi (strain ATCC 51908 / MS32).